The chain runs to 106 residues: MNDSEFHRLADALWLTIEERLDNWDGDSDIDCEINGGVLTLSFENGSKIIINRQEPLHQVWLATKQGGYHFDLKDDEWVCDRSGETFWDLLEQAATQQAGEKVSFR.

Belongs to the frataxin family.

In terms of biological role, involved in iron-sulfur (Fe-S) cluster assembly. May act as a regulator of Fe-S biogenesis. This chain is Iron-sulfur cluster assembly protein CyaY, found in Salmonella newport (strain SL254).